A 565-amino-acid polypeptide reads, in one-letter code: uncharacterized protein (565 aa).

Helical transmembrane passes span 14–34 (LAIF…IGKF), 36–56 (LGVV…DITV), 92–112 (MGFA…LAKI), 117–137 (VGEA…IGVA), and 157–177 (IIPV…AWVL). The RCK C-terminal domain maps to 296–381 (PEVLDPQLLD…VDAAAKQLGY (86 aa)). A run of 6 helical transmembrane segments spans residues 391-411 (MIFV…SIHM), 414-434 (VPIS…FGWL), 448-468 (ALWI…GIAA), 481-501 (LSLF…GILM), 508-530 (FHPA…LGAI), and 545-565 (VTYA…VLLM).

Belongs to the AAE transporter (TC 2.A.81) family.

The protein resides in the cell membrane. This is an uncharacterized protein from Bacteroides fragilis (strain YCH46).